The primary structure comprises 345 residues: Meiotic recombination protein rec12 (345 aa).

A Topo IIA-type catalytic domain is found at 5-137 (DKKKVVRSWI…LNVEASAKGL (133 aa)). Y98 (O-(5'-phospho-DNA)-tyrosine intermediate) is an active-site residue. Mg(2+) contacts are provided by E179 and D229.

The protein belongs to the TOP6A family. In terms of assembly, component of the DSB catalytic core (DSBC) complex, composed of at least rec12, rec6 and rec14. The complex interacts with mde2. It depends on Mg(2+) as a cofactor.

It localises to the cytoplasm. Its subcellular location is the nucleus. It catalyses the reaction ATP-dependent breakage, passage and rejoining of double-stranded DNA.. Functionally, required for formation of the double-strand breaks (DSBs) that initiate meiotic recombination. Required for crossover recombination and chiasmatic segregation of chromosomes during meiosis I. Also involved in the faithful equational segregation of chromosomes during meiosis II. The chain is Meiotic recombination protein rec12 from Schizosaccharomyces pombe (strain 972 / ATCC 24843) (Fission yeast).